The following is a 512-amino-acid chain: Bestrophin-2 (512 aa).

Over 1 to 31 (MTVTYTARVAKARFGGFSKLLLLWRGSIYKL) the chain is Cytoplasmic. Ala-10 lines the Ca(2+) pocket. A helical membrane pass occupies residues 32-51 (LWRELLCFLGLFMALSAAYR). Topologically, residues 52-60 (FVLTEEQKR) are extracellular. The helical transmembrane segment at 61 to 82 (YFEKLVLYCDRYASLIPVSFVL) threads the bilayer. Topologically, residues 83 to 238 (GFYVTLVVHR…WISVPLVYTQ (156 aa)) are cytoplasmic. Residues 239 to 255 (VVTIAVYSYFLACLIGR) traverse the membrane as a helical segment. Over 256–274 (QFLDPAQGYKDHDLDLCVP) the chain is Extracellular. A helical transmembrane segment spans residues 275–288 (IFTLLQFFFYAGWL). Residues 289–512 (KVAEQLINPF…PIGEEEESLA (224 aa)) are Cytoplasmic-facing. 4 residues coordinate Ca(2+): Gln-293, Asn-296, Asp-301, and Asp-304. Residues 453-512 (VDLGQPEPESEPITGPESPALVPAPRAPSEPLTVVPLSGTRGPAPPWLPSPIGEEEESLA) form a disordered region.

Belongs to the anion channel-forming bestrophin (TC 1.A.46) family. Calcium-sensitive chloride channel subfamily. Pentamer. Interacts with GLUL; this interaction tethers a fraction of GLUL to the membrane, causing a decrease of cytosolic glutamine synthase (GS) activity and inhibits the chloride channel activity of BEST2 by affecting the gating at the aperture in the absence of intracellular glutamate.

It localises to the cell membrane. The protein localises to the basolateral cell membrane. The enzyme catalyses chloride(in) = chloride(out). It catalyses the reaction iodide(out) = iodide(in). The catalysed reaction is hydrogencarbonate(in) = hydrogencarbonate(out). It carries out the reaction L-glutamate(out) = L-glutamate(in). The enzyme catalyses L-glutamine(out) = L-glutamine(in). With respect to regulation, chloride channel activity is allosterically inhibited by GLUL/glutamine synthase (GS) which affects the gating at the aperture in the absence of intracellular glutamate. Inhibitory effect of GLUL is relieved upon increasing of intracellular level of L-glutamate. Functionally, ligand-gated anion channel that allows the movement of anions across cell membranes when activated by calcium (Ca2+). Transports a large specter of anions, namely mediates the movement of chloride, L-glutamate and iodide. Calcium-binding triggers the dilation of the aperture, but calcium-dependent gating is only effective when the size of the passing anion is bigger than the closed aperture. Mediates the calcium-activated hydrogencarbonate movement and participates in colonic hydrogencarbonate secretion concomitant with mucin secretion. In non-pigmented epithelium (NPE), mediates the efflux of intracellular L-glutamate; binding of intracellular L-glutamate activates and open both the neck and the aperture of the channel, leading to L-glutamate exit promoting chloride influx movement from the extracellular side in trans. Also exhibits a directional permeability for intracellular glutamine, in a similar manner as for L-glutamate. This chain is Bestrophin-2, found in Bos taurus (Bovine).